The primary structure comprises 317 residues: Protoheme IX farnesyltransferase (317 aa).

Helical transmembrane passes span 25 to 45 (FFAL…LVGM), 54 to 74 (PVIG…SGCL), 117 to 137 (LMLG…TIVF), 167 to 189 (IGQA…IIFI), 244 to 264 (LGFG…AMLV), and 281 to 301 (AAMS…SALL).

Belongs to the UbiA prenyltransferase family. Protoheme IX farnesyltransferase subfamily.

It localises to the cell inner membrane. It catalyses the reaction heme b + (2E,6E)-farnesyl diphosphate + H2O = Fe(II)-heme o + diphosphate. The protein operates within porphyrin-containing compound metabolism; heme O biosynthesis; heme O from protoheme: step 1/1. Its function is as follows. Converts heme B (protoheme IX) to heme O by substitution of the vinyl group on carbon 2 of heme B porphyrin ring with a hydroxyethyl farnesyl side group. This is Protoheme IX farnesyltransferase from Methylobacterium nodulans (strain LMG 21967 / CNCM I-2342 / ORS 2060).